The sequence spans 354 residues: Ferredoxin--NADP reductase (354 aa).

D42, Q50, Y55, I95, F130, D299, and T339 together coordinate FAD.

Belongs to the ferredoxin--NADP reductase type 2 family. In terms of assembly, homodimer. FAD is required as a cofactor.

The enzyme catalyses 2 reduced [2Fe-2S]-[ferredoxin] + NADP(+) + H(+) = 2 oxidized [2Fe-2S]-[ferredoxin] + NADPH. This chain is Ferredoxin--NADP reductase, found in Acidovorax sp. (strain JS42).